Here is a 43-residue protein sequence, read N- to C-terminus: Photosystem II reaction center protein Y (43 aa).

A helical transmembrane segment spans residues 8–26 (LFLVVAPILAAVSWAAFNI).

This sequence belongs to the PsbY family. As to quaternary structure, PSII is composed of 1 copy each of membrane proteins PsbA, PsbB, PsbC, PsbD, PsbE, PsbF, PsbH, PsbI, PsbJ, PsbK, PsbL, PsbM, PsbT, PsbX, PsbY, PsbZ, Psb30/Ycf12, peripheral proteins PsbO, CyanoQ (PsbQ), PsbU, PsbV and a large number of cofactors. It forms dimeric complexes.

It is found in the cellular thylakoid membrane. Functionally, loosely associated component of the core of photosystem II (PSII), it is not always seen in crystals. PSII is a light-driven water plastoquinone oxidoreductase, using light energy to abstract electrons from H(2)O, generating a proton gradient subsequently used for ATP formation. This Parasynechococcus marenigrum (strain WH8102) protein is Photosystem II reaction center protein Y.